Here is a 562-residue protein sequence, read N- to C-terminus: MDPQPPPPAQGSPPHRDRGRGRGRGRGRGRGRGRGRGGAGAPRAPLPCPTCGRLFRFPYYLSRHRLSHSGLRPHACPLCPKAFRRPAHLSRHLRGHGPQPPLRCAACPRTFPEPAQLRRHLAQEHAGSEVDLSTQRAVKEEPEASWGPQDEGVEQPATVVVAGAEEEATTQWPAGDSAPAAVPTSTDPRESEAKEAEAGAAELRAELALAAGRQEEKQVLLQADWTLLCLRCREAFATKGELKAHPCLRPEGEQEGEGGPPPRPKRHQCSICLKAFARPWSLSRHRLVHSTDRPFVCPDCGLAFRLASYLRQHRRVHGPLSLLAPLPGAGKKDDKASGGRNSGKGPEGGEGAECGGASEGGEGGHNGGDATPARPPAGEPRFWCPECGKGFRRRAHLRQHGVTHSGARPFQCVRCQREFKRLADLARHAQVHAGGPAPHPCPRCPRRFSRAYSLLRHQRCHRAELERAELERAAALQELQTQASQSPQPPQPLKQEAEGLPLPIAHIKEEPPSPGTPPQSPPAPPVFLSASCFDSQDHSAFEMEDEEMDSKAHLCGLGGLAS.

A compositionally biased stretch (pro residues) spans 1–11 (MDPQPPPPAQG). The disordered stretch occupies residues 1-45 (MDPQPPPPAQGSPPHRDRGRGRGRGRGRGRGRGRGRGGAGAPRAP). The span at 17–35 (DRGRGRGRGRGRGRGRGRG) shows a compositional bias: basic residues. 3 C2H2-type zinc fingers span residues 46–68 (LPCP…RLSH), 74–96 (HACP…LRGH), and 102–125 (LRCA…AQEH). Arg94 bears the Omega-N-methylarginine mark. Disordered regions lie at residues 120–154 (HLAQ…EGVE) and 166–199 (EEAT…AEAG). Residues 187-197 (DPRESEAKEAE) show a composition bias toward basic and acidic residues. At Ser191 the chain carries Phosphoserine. 2 C2H2-type zinc fingers span residues 267–289 (HQCS…RLVH) and 295–317 (FVCP…RRVH). Residues 321-377 (SLLAPLPGAGKKDDKASGGRNSGKGPEGGEGAECGGASEGGEGGHNGGDATPARPPA) form a disordered region. Gly residues predominate over residues 340-367 (RNSGKGPEGGEGAECGGASEGGEGGHNG). C2H2-type zinc fingers lie at residues 382 to 404 (FWCP…GVTH), 410 to 432 (FQCV…AQVH), and 439 to 461 (HPCP…QRCH). Ser486 is subject to Phosphoserine. The disordered stretch occupies residues 505 to 530 (AHIKEEPPSPGTPPQSPPAPPVFLSA). The segment covering 512–525 (PSPGTPPQSPPAPP) has biased composition (pro residues).

This sequence belongs to the krueppel C2H2-type zinc-finger protein family.

The protein resides in the nucleus. May be involved in transcriptional regulation. The chain is Zinc finger protein 579 (Znf579) from Mus musculus (Mouse).